The primary structure comprises 505 residues: Dolichyl pyrophosphate Glc1Man9GlcNAc2 alpha-1,3-glucosyltransferase (505 aa).

The Lumenal portion of the chain corresponds to 1–3 (MAE). The chain crosses the membrane as a helical span at residues 4–24 (IYPSLVQCAIVATAFKVLLFP). Residues 25 to 101 (AYKSTDFEVH…DSWQTVYFQR (77 aa)) are Cytoplasmic-facing. Residues 102–122 (WTVIVTELVLLYALQMFVDST) traverse the membrane as a helical segment. At 123-128 (PGVSKR) the chain is on the lumenal side. Residues 129-149 (AAHAAAVSILLSPGLLIIDHI) traverse the membrane as a helical segment. Topologically, residues 150-152 (HFQ) are cytoplasmic. The helical transmembrane segment at 153 to 169 (YNGVMYGILIASLVLAK) threads the bilayer. Residues 170-173 (KKSS) are Lumenal-facing. The chain crosses the membrane as a helical span at residues 174-194 (LLASGLVFAALLCMKHIYLYL). Over 195–224 (APAYFVYLLRVYCLPPKLSPRSIFRIQFFN) the chain is Cytoplasmic. The helical transmembrane segment at 225-245 (CVKLGGGIAAIFAAAFGPFAL) threads the bilayer. The Lumenal segment spans residues 246 to 319 (KNQIPQIFSR…TSFAVLPDIT (74 aa)). A helical membrane pass occupies residues 320–340 (PRMCFVLTLLFQAIPLIKLFM). Residues 341–359 (RPTWEGFIGGVTLCGYASF) lie on the Cytoplasmic side of the membrane. Residues 360–380 (LFGWHVHEKAILLVIIPFSLI) traverse the membrane as a helical segment. The Lumenal segment spans residues 381–386 (ALKDRR). A helical transmembrane segment spans residues 387-407 (YLGAFRPLAVAGHVSLFPLIF). The Cytoplasmic segment spans residues 408–409 (TP). Residues 410–430 (AEFPIKTVYTIFWLVLFLMAF) traverse the membrane as a helical segment. Topologically, residues 431–450 (DRLAPAPTRQRLFLFDRFST) are lumenal. Residues 451 to 471 (AYITVSIPLIFYCSLMHGIIF) form a helical membrane-spanning segment. The Cytoplasmic portion of the chain corresponds to 472–480 (GKSYEFLPL). A helical membrane pass occupies residues 481-501 (MFTSSYSAIGVVGSWLGFMVV). Topologically, residues 502–505 (YFTE) are lumenal.

Belongs to the ALG6/ALG8 glucosyltransferase family.

Its subcellular location is the endoplasmic reticulum membrane. It catalyses the reaction an alpha-D-Glc-(1-&gt;3)-alpha-D-Man-(1-&gt;2)-alpha-D-Man-(1-&gt;2)-alpha-D-Man-(1-&gt;3)-[alpha-D-Man-(1-&gt;2)-alpha-D-Man-(1-&gt;3)-[alpha-D-Man-(1-&gt;2)-alpha-D-Man-(1-&gt;6)]-alpha-D-Man-(1-&gt;6)]-beta-D-Man-(1-&gt;4)-beta-D-GlcNAc-(1-&gt;4)-alpha-D-GlcNAc-diphospho-di-trans,poly-cis-dolichol + a di-trans,poly-cis-dolichyl beta-D-glucosyl phosphate = an alpha-D-Glc-(1-&gt;3)-alpha-D-Glc-(1-&gt;3)-alpha-D-Man-(1-&gt;2)-alpha-D-Man-(1-&gt;2)-alpha-D-Man-(1-&gt;3)-[alpha-D-Man-(1-&gt;2)-alpha-D-Man-(1-&gt;3)-[alpha-D-Man-(1-&gt;2)-alpha-D-Man-(1-&gt;6)]-alpha-D-Man-(1-&gt;6)]-beta-D-Man-(1-&gt;4)-beta-D-GlcNAc-(1-&gt;4)-alpha-D-GlcNAc-diphospho-di-trans,poly-cis-dolichol + a di-trans,poly-cis-dolichyl phosphate + H(+). The protein operates within protein modification; protein glycosylation. Functionally, dolichyl pyrophosphate Glc1Man9GlcNAc2 alpha-1,3-glucosyltransferase that operates in the biosynthetic pathway of dolichol-linked oligosaccharides, the glycan precursors employed in protein asparagine (N)-glycosylation. The assembly of dolichol-linked oligosaccharides begins on the cytosolic side of the endoplasmic reticulum membrane and finishes in its lumen. The sequential addition of sugars to dolichol pyrophosphate produces dolichol-linked oligosaccharides containing fourteen sugars, including two GlcNAcs, nine mannoses and three glucoses. Once assembled, the oligosaccharide is transferred from the lipid to nascent proteins by oligosaccharyltransferases. In the lumen of the endoplasmic reticulum, adds the second glucose residue from dolichyl phosphate glucose (Dol-P-Glc) onto the lipid-linked oligosaccharide intermediate Glc(1)Man(9)GlcNAc(2)-PP-Dol to produce Glc(2)Man(9)GlcNAc(2)-PP-Dol. The protein is Dolichyl pyrophosphate Glc1Man9GlcNAc2 alpha-1,3-glucosyltransferase (alg-8) of Neurospora crassa (strain ATCC 24698 / 74-OR23-1A / CBS 708.71 / DSM 1257 / FGSC 987).